The primary structure comprises 135 residues: MMVMTALTLLILFFGLAFILVGFGLILGYLIFSRKNKTVNGTANRTVVVERDSSNLLGTAAAVAGGVIAGELITDAIEDVINNNENNEADGYNSEGIETTIEDTIEEIDKGVDNVIEDITDEIDNITNDIGDSFF.

The next 2 membrane-spanning stretches (helical) occupy residues 11–31 and 57–77; these read ILFF…GYLI and LGTA…TDAI.

The protein resides in the cell membrane. This is an uncharacterized protein from Methanocaldococcus jannaschii (strain ATCC 43067 / DSM 2661 / JAL-1 / JCM 10045 / NBRC 100440) (Methanococcus jannaschii).